We begin with the raw amino-acid sequence, 475 residues long: UDP-glucosyltransferase 102 (475 aa).

Residues Ser-278, 344 to 345 (WA), 362 to 370 (HCGWNSTLE), and 384 to 387 (YGEQ) each bind UDP-alpha-D-glucose.

It belongs to the UDP-glycosyltransferase family.

It functions in the pathway secondary metabolite biosynthesis; terpenoid biosynthesis. Probable component of the triterpene saponins (e.g. ginsenosides) biosynthetic pathway. No detectable activity toward protopanaxatriol (PPT). This is UDP-glucosyltransferase 102 (UGT102) from Panax ginseng (Korean ginseng).